We begin with the raw amino-acid sequence, 345 residues long: MAQHHLWILLLCLQTWPEAAGKDSEIFTVNGILGESVTFPVNIQEPRQVKIIAWTSKTSVAYVTPGDSETAPVVTVTHRNYYERIHALGPNYNLVISDLRMEDAGDYKADINTQADPYTTTKRYNLQIYRRLGKPKITQSLMASVNSTCNVTLTCSVEKEEKNVTYNWSPLGEEGNVLQIFQTPEDQELTYTCTAQNPVSNNSDSISARQLCADIAMGFRTHHTGLLSVLAMFFLLVLILSSVFLFRLFKRRQGRIFPEGSCLNTFTKNPYAASKKTIYTYIMASRNTQPAESRIYDEILQSKVLPSKEEPVNTVYSEVQFADKMGKASTQDSKPPGTSSYEIVI.

The signal sequence occupies residues Met1 to Gly21. At Lys22–Gly225 the chain is on the extracellular side. The region spanning Ile26–Tyr129 is the Ig-like V-type domain. The 73-residue stretch at Pro135–Ser207 folds into the Ig-like C2-type domain. A glycan (N-linked (GlcNAc...) asparagine) is linked at Asn150. Cys155 and Cys193 are joined by a disulfide. A helical membrane pass occupies residues Leu226 to Phe246. Over Arg247–Ile345 the chain is Cytoplasmic. The ITSM 1 signature appears at Thr277–Ile282. Tyr279 is subject to Phosphotyrosine. Tyr296 bears the Phosphotyrosine; by LYN mark. The short motif at Thr314–Val319 is the ITSM 2 element. Tyr316 carries the phosphotyrosine modification. A disordered region spans residues Gly326–Ile345. A compositionally biased stretch (polar residues) spans Ala328–Ile345. Phosphotyrosine; by FES is present on Tyr341.

As to quaternary structure, homodimer; via its extracellular domain. Forms a head to tail dimer with a CD48 molecule from another cell. Interacts with SH2 domain-containing proteins SH2D1A/SAP and SH2D1B/EAT-2. Interacts with tyrosine-protein phosphatases PTPN6/SHP-1 and PTPN11//SHP-2 via its phosphorylated cytoplasmic domain, and this interaction is blocked by SH2D1A. Interacts (via phosphorylated ITSM 1 and 2) with INPP5D/SHIP1. In terms of processing, phosphorylated by tyrosine-protein kinase LCK on tyrosine residues following ligation induced by agonist monoclonal antibody. The association with SH2D1A is dependent of tyrosine phosphorylation of its cytoplasmic domain. Phosphorylated on Tyr-296 and Tyr-316 following platelet aggregation. Phosphorylated on tyrosine residues upon high affinity immunoglobulin epsilon receptor aggregation in mast cells. N-glycosylated. As to expression, predominantly expressed in hematopoietic tissues, such as lymph node, spleen and peripheral leukocytes. Expressed in macrophages, B-cells, monocytes, platelets, thymocytes, T-cells and dendritic cells. Highly expressed in memory T-cells. Expressed in mast cells.

The protein resides in the cell membrane. Self-ligand receptor of the signaling lymphocytic activation molecule (SLAM) family. SLAM receptors triggered by homo- or heterotypic cell-cell interactions are modulating the activation and differentiation of a wide variety of immune cells and thus are involved in the regulation and interconnection of both innate and adaptive immune response. Activities are controlled by presence or absence of small cytoplasmic adapter proteins, SH2D1A/SAP and/or SH2D1B/EAT-2. Can mediate natural killer (NK) cell cytotoxicity dependent on SH2D1A and SH2D1B. Increases proliferative responses of activated T-cells and SH2D1A/SAP does not seem be required for this process. Homophilic interactions enhance interferon gamma/IFNG secretion in lymphocytes and induce platelet stimulation via a SH2D1A-dependent pathway. May serve as a marker for hematopoietic progenitor cells Required for a prolonged T-cell:B-cell contact, optimal T follicular helper function, and germinal center formation. In germinal centers involved in maintaining B-cell tolerance and in preventing autoimmunity. In mast cells negatively regulates high affinity immunoglobulin epsilon receptor signaling; independent of SH2D1A and SH2D1B but implicating FES and PTPN6/SHP-1. In macrophages enhances LPS-induced MAPK phosphorylation and NF-kappaB activation and modulates LPS-induced cytokine secretion; involving ITSM 2. Positively regulates macroautophagy in primary dendritic cells via stabilization of IRF8; inhibits TRIM21-mediated proteasomal degradation of IRF8. This Homo sapiens (Human) protein is SLAM family member 5 (CD84).